The chain runs to 268 residues: Orotidine 5'-phosphate decarboxylase (268 aa).

Substrate-binding positions include D39, 61 to 63 (KTH), 93 to 102 (DRKFADIGNT), Y219, and R237. K95 (proton donor) is an active-site residue.

Belongs to the OMP decarboxylase family.

It carries out the reaction orotidine 5'-phosphate + H(+) = UMP + CO2. It functions in the pathway pyrimidine metabolism; UMP biosynthesis via de novo pathway; UMP from orotate: step 2/2. This chain is Orotidine 5'-phosphate decarboxylase (URA3), found in Pachysolen tannophilus (Yeast).